A 261-amino-acid chain; its full sequence is Thiazole synthase (261 aa).

Residue Lys101 is the Schiff-base intermediate with DXP of the active site. 1-deoxy-D-xylulose 5-phosphate contacts are provided by residues Gly162, 188-189, and 210-211; these read AG and NT.

It belongs to the ThiG family. Homotetramer. Forms heterodimers with either ThiH or ThiS.

The protein localises to the cytoplasm. It carries out the reaction [ThiS sulfur-carrier protein]-C-terminal-Gly-aminoethanethioate + 2-iminoacetate + 1-deoxy-D-xylulose 5-phosphate = [ThiS sulfur-carrier protein]-C-terminal Gly-Gly + 2-[(2R,5Z)-2-carboxy-4-methylthiazol-5(2H)-ylidene]ethyl phosphate + 2 H2O + H(+). It functions in the pathway cofactor biosynthesis; thiamine diphosphate biosynthesis. In terms of biological role, catalyzes the rearrangement of 1-deoxy-D-xylulose 5-phosphate (DXP) to produce the thiazole phosphate moiety of thiamine. Sulfur is provided by the thiocarboxylate moiety of the carrier protein ThiS. In vitro, sulfur can be provided by H(2)S. This Aromatoleum aromaticum (strain DSM 19018 / LMG 30748 / EbN1) (Azoarcus sp. (strain EbN1)) protein is Thiazole synthase.